We begin with the raw amino-acid sequence, 172 residues long: Small ribosomal subunit protein uS5 (172 aa).

Positions 11–74 (LFESVVDIAR…RKAKGAMIRF (64 aa)) constitute an S5 DRBM domain.

It belongs to the universal ribosomal protein uS5 family. In terms of assembly, part of the 30S ribosomal subunit. Contacts proteins S4 and S8.

In terms of biological role, with S4 and S12 plays an important role in translational accuracy. Functionally, located at the back of the 30S subunit body where it stabilizes the conformation of the head with respect to the body. The sequence is that of Small ribosomal subunit protein uS5 from Neorickettsia sennetsu (strain ATCC VR-367 / Miyayama) (Ehrlichia sennetsu).